Consider the following 232-residue polypeptide: Anti-sigma-K factor RskA (232 aa).

At 1-90 (MTEHTDFELL…EVRRQSRWRT (90 aa)) the chain is on the cytoplasmic side. Residues 91-111 (AAFASAAAIAVGLGAFGLGVL) traverse the membrane as a helical segment. At 112–232 (TRPSPPPTVA…GTILAELPLG (121 aa)) the chain is on the extracellular side.

Belongs to the anti-sigma-K factor family.

The protein resides in the cell membrane. Its function is as follows. An anti-sigma factor for extracytoplasmic function (ECF) sigma factor SigK. ECF sigma factors are held in an inactive form by an anti-sigma factor until released by regulated intramembrane proteolysis (RIP). RIP occurs when an extracytoplasmic signal triggers a concerted proteolytic cascade to transmit information and elicit cellular responses. The membrane-spanning regulatory substrate protein is first cut extracytoplasmically (site-1 protease, S1P), then within the membrane itself (site-2 protease, S2P, Rip1), while cytoplasmic proteases finish degrading the regulatory protein, liberating the sigma factor. The polypeptide is Anti-sigma-K factor RskA (rskA) (Mycobacterium tuberculosis (strain ATCC 25177 / H37Ra)).